The following is a 719-amino-acid chain: UvrABC system protein B (719 aa).

Residues 49–435 form the Helicase ATP-binding domain; that stretch reads RRINAGERDV…TGGEFVEQVI (387 aa). 62–69 is an ATP binding site; it reads GATGTGKS. The Beta-hairpin signature appears at 115–138; it reads YYDYYQPEAYIAQTDTYIEKDSSI. The Helicase C-terminal domain occupies 453–606; that stretch reads QIDDLIGEIR…QIAYNEANGI (154 aa). A disordered region spans residues 635–654; that stretch reads GGSGRNASRGRRAQGEPGRA. Residues 674-709 enclose the UVR domain; sequence ADLIKDLTAQMMAAARDLQFELAARFRDEIADLKRE.

This sequence belongs to the UvrB family. In terms of assembly, forms a heterotetramer with UvrA during the search for lesions. Interacts with UvrC in an incision complex.

It is found in the cytoplasm. The UvrABC repair system catalyzes the recognition and processing of DNA lesions. A damage recognition complex composed of 2 UvrA and 2 UvrB subunits scans DNA for abnormalities. Upon binding of the UvrA(2)B(2) complex to a putative damaged site, the DNA wraps around one UvrB monomer. DNA wrap is dependent on ATP binding by UvrB and probably causes local melting of the DNA helix, facilitating insertion of UvrB beta-hairpin between the DNA strands. Then UvrB probes one DNA strand for the presence of a lesion. If a lesion is found the UvrA subunits dissociate and the UvrB-DNA preincision complex is formed. This complex is subsequently bound by UvrC and the second UvrB is released. If no lesion is found, the DNA wraps around the other UvrB subunit that will check the other stand for damage. In Mycobacterium tuberculosis (strain CDC 1551 / Oshkosh), this protein is UvrABC system protein B.